Reading from the N-terminus, the 111-residue chain is Cytochrome c (111 aa).

Residue Ala1 is modified to N-acetylalanine. Positions 22, 25, and 26 each coordinate heme c. Lys80 is subject to N6,N6,N6-trimethyllysine. Met88 serves as a coordination point for heme c. The residue at position 94 (Lys94) is an N6,N6,N6-trimethyllysine.

Belongs to the cytochrome c family. Binds 1 heme c group covalently per subunit.

Its subcellular location is the mitochondrion intermembrane space. Its function is as follows. Electron carrier protein. The oxidized form of the cytochrome c heme group can accept an electron from the heme group of the cytochrome c1 subunit of cytochrome reductase. Cytochrome c then transfers this electron to the cytochrome oxidase complex, the final protein carrier in the mitochondrial electron-transport chain. The polypeptide is Cytochrome c (Vigna radiata var. radiata (Mung bean)).